A 522-amino-acid polypeptide reads, in one-letter code: Apolipoprotein N-acyltransferase (522 aa).

Transmembrane regions (helical) follow at residues 17–37, 61–81, 98–118, 127–147, 164–184, and 197–217; these read YFTY…FSPF, TALL…VSWL, FLVG…TYLV, VIFA…FTGF, IAPI…SAVI, and LKLV…SAYS. One can recognise a CN hydrolase domain in the interval 236-483; that stretch reads AQGNIEQNLK…ETTLTYKIAP (248 aa). E276 serves as the catalytic Proton acceptor. The active site involves K342. The active-site Nucleophile is C394. Residues 495–515 form a helical membrane-spanning segment; that stretch reads NMPLYALSLLFLLLHSMMAFI.

This sequence belongs to the CN hydrolase family. Apolipoprotein N-acyltransferase subfamily.

The protein resides in the cell inner membrane. It carries out the reaction N-terminal S-1,2-diacyl-sn-glyceryl-L-cysteinyl-[lipoprotein] + a glycerophospholipid = N-acyl-S-1,2-diacyl-sn-glyceryl-L-cysteinyl-[lipoprotein] + a 2-acyl-sn-glycero-3-phospholipid + H(+). The protein operates within protein modification; lipoprotein biosynthesis (N-acyl transfer). Its function is as follows. Catalyzes the phospholipid dependent N-acylation of the N-terminal cysteine of apolipoprotein, the last step in lipoprotein maturation. This Haemophilus influenzae (strain ATCC 51907 / DSM 11121 / KW20 / Rd) protein is Apolipoprotein N-acyltransferase.